Here is a 78-residue protein sequence, read N- to C-terminus: Large ribosomal subunit protein bL28 (78 aa).

The interval 1–24 (MSQVCQVTGKRPVTGNNVSHSQRK) is disordered.

It belongs to the bacterial ribosomal protein bL28 family.

The sequence is that of Large ribosomal subunit protein bL28 from Chromohalobacter salexigens (strain ATCC BAA-138 / DSM 3043 / CIP 106854 / NCIMB 13768 / 1H11).